The primary structure comprises 286 residues: Bifunctional protein FolD (286 aa).

NADP(+)-binding positions include 164–166 (GRS), S193, and I234.

This sequence belongs to the tetrahydrofolate dehydrogenase/cyclohydrolase family. Homodimer.

The enzyme catalyses (6R)-5,10-methylene-5,6,7,8-tetrahydrofolate + NADP(+) = (6R)-5,10-methenyltetrahydrofolate + NADPH. The catalysed reaction is (6R)-5,10-methenyltetrahydrofolate + H2O = (6R)-10-formyltetrahydrofolate + H(+). Its pathway is one-carbon metabolism; tetrahydrofolate interconversion. In terms of biological role, catalyzes the oxidation of 5,10-methylenetetrahydrofolate to 5,10-methenyltetrahydrofolate and then the hydrolysis of 5,10-methenyltetrahydrofolate to 10-formyltetrahydrofolate. The polypeptide is Bifunctional protein FolD (Nitratidesulfovibrio vulgaris (strain ATCC 29579 / DSM 644 / CCUG 34227 / NCIMB 8303 / VKM B-1760 / Hildenborough) (Desulfovibrio vulgaris)).